A 954-amino-acid polypeptide reads, in one-letter code: Glycine dehydrogenase (decarboxylating) (954 aa).

K701 bears the N6-(pyridoxal phosphate)lysine mark.

Belongs to the GcvP family. In terms of assembly, the glycine cleavage system is composed of four proteins: P, T, L and H. Requires pyridoxal 5'-phosphate as cofactor.

It carries out the reaction N(6)-[(R)-lipoyl]-L-lysyl-[glycine-cleavage complex H protein] + glycine + H(+) = N(6)-[(R)-S(8)-aminomethyldihydrolipoyl]-L-lysyl-[glycine-cleavage complex H protein] + CO2. Its function is as follows. The glycine cleavage system catalyzes the degradation of glycine. The P protein binds the alpha-amino group of glycine through its pyridoxal phosphate cofactor; CO(2) is released and the remaining methylamine moiety is then transferred to the lipoamide cofactor of the H protein. The chain is Glycine dehydrogenase (decarboxylating) from Bordetella parapertussis (strain 12822 / ATCC BAA-587 / NCTC 13253).